The following is a 427-amino-acid chain: Gamma-glutamyl phosphate reductase (427 aa).

The protein belongs to the gamma-glutamyl phosphate reductase family.

Its subcellular location is the cytoplasm. The enzyme catalyses L-glutamate 5-semialdehyde + phosphate + NADP(+) = L-glutamyl 5-phosphate + NADPH + H(+). It participates in amino-acid biosynthesis; L-proline biosynthesis; L-glutamate 5-semialdehyde from L-glutamate: step 2/2. In terms of biological role, catalyzes the NADPH-dependent reduction of L-glutamate 5-phosphate into L-glutamate 5-semialdehyde and phosphate. The product spontaneously undergoes cyclization to form 1-pyrroline-5-carboxylate. The sequence is that of Gamma-glutamyl phosphate reductase from Rhizobium rhizogenes (strain K84 / ATCC BAA-868) (Agrobacterium radiobacter).